Reading from the N-terminus, the 364-residue chain is Fructose-bisphosphate aldolase C (364 aa).

A Phosphotyrosine modification is found at tyrosine 5. Serine 36, serine 39, and serine 45 each carry phosphoserine. Arginine 56 is a substrate binding site. The residue at position 111 (lysine 111) is an N6-acetyllysine. Serine 132 is subject to Phosphoserine. Lysine 147 is a substrate binding site. Glutamate 188 acts as the Proton acceptor in catalysis. Lysine 230 (schiff-base intermediate with dihydroxyacetone-P) is an active-site residue.

This sequence belongs to the class I fructose-bisphosphate aldolase family. Homotetramer. Interacts with ATP6V1E1.

It carries out the reaction beta-D-fructose 1,6-bisphosphate = D-glyceraldehyde 3-phosphate + dihydroxyacetone phosphate. Its pathway is carbohydrate degradation; glycolysis; D-glyceraldehyde 3-phosphate and glycerone phosphate from D-glucose: step 4/4. The protein is Fructose-bisphosphate aldolase C (ALDOC) of Macaca fascicularis (Crab-eating macaque).